Consider the following 37-residue polypeptide: Large ribosomal subunit protein bL36 (37 aa).

This sequence belongs to the bacterial ribosomal protein bL36 family.

This chain is Large ribosomal subunit protein bL36, found in Nostoc punctiforme (strain ATCC 29133 / PCC 73102).